The primary structure comprises 380 residues: MATQLDYYAILEVSRTATADELKKSYRKLAMKYHPDRNPGDDAAEAKFKEINQAYDILKDEQKRAAYDQYGHAAFEGGGPGPGGFDFGGGFGGGGLGDIFEQMFGDMMGGRRGGRARTGNDIQTHVEITLEEAFSGVKKDVRVITRVACEACHGTGSDDGASGVEVCPSCHGAGKVRAQQGFFVVERPCPTCHGAGKVVKNPCKVCHGEGTVEKERTVEVQIPAGVEDGTRIRLSGEGEAGGNGVPPGDLYIHVSVTEHGIFQRDGANIYCRVPLRMAQAALGTEIEVPVIDGSRTKVKIPAGTQTGAHFRLRGKGFSVLRSTARGDMYIQVTVETPQNLSKRQRELLEEFEKEAGEDVKQSPEHTGFFRRVRDFFEGKE.

Residues 6–71 (DYYAILEVSR…QKRAAYDQYG (66 aa)) form the J domain. The CR-type zinc finger occupies 136–215 (GVKKDVRVIT…CHGEGTVEKE (80 aa)). Zn(2+) contacts are provided by cysteine 149, cysteine 152, cysteine 167, cysteine 170, cysteine 189, cysteine 192, cysteine 203, and cysteine 206. 4 CXXCXGXG motif repeats span residues 149-156 (CEACHGTG), 167-174 (CPSCHGAG), 189-196 (CPTCHGAG), and 203-210 (CKVCHGEG).

Belongs to the DnaJ family. Homodimer. Zn(2+) serves as cofactor.

It localises to the cytoplasm. Its function is as follows. Participates actively in the response to hyperosmotic and heat shock by preventing the aggregation of stress-denatured proteins and by disaggregating proteins, also in an autonomous, DnaK-independent fashion. Unfolded proteins bind initially to DnaJ; upon interaction with the DnaJ-bound protein, DnaK hydrolyzes its bound ATP, resulting in the formation of a stable complex. GrpE releases ADP from DnaK; ATP binding to DnaK triggers the release of the substrate protein, thus completing the reaction cycle. Several rounds of ATP-dependent interactions between DnaJ, DnaK and GrpE are required for fully efficient folding. Also involved, together with DnaK and GrpE, in the DNA replication of plasmids through activation of initiation proteins. The chain is Chaperone protein DnaJ from Acetobacter pasteurianus (strain NBRC 105184 / IFO 3283-01).